Consider the following 334-residue polypeptide: Ketol-acid reductoisomerase (NADP(+)) (334 aa).

Residues 1–181 (MTTVYYDQDV…GATRAGVIET (181 aa)) form the KARI N-terminal Rossmann domain. NADP(+) is bound by residues 25–28 (YGSQ), Arg-48, Ser-52, and 82–85 (DEIQ). The active site involves His-107. Gly-133 is an NADP(+) binding site. In terms of domain architecture, KARI C-terminal knotted spans 182 to 327 (TFKEETETDL…RELREMMPFI (146 aa)). 4 residues coordinate Mg(2+): Asp-190, Glu-194, Glu-226, and Glu-230. Residue Ser-251 participates in substrate binding.

Belongs to the ketol-acid reductoisomerase family. The cofactor is Mg(2+).

The catalysed reaction is (2R)-2,3-dihydroxy-3-methylbutanoate + NADP(+) = (2S)-2-acetolactate + NADPH + H(+). The enzyme catalyses (2R,3R)-2,3-dihydroxy-3-methylpentanoate + NADP(+) = (S)-2-ethyl-2-hydroxy-3-oxobutanoate + NADPH + H(+). Its pathway is amino-acid biosynthesis; L-isoleucine biosynthesis; L-isoleucine from 2-oxobutanoate: step 2/4. It functions in the pathway amino-acid biosynthesis; L-valine biosynthesis; L-valine from pyruvate: step 2/4. Involved in the biosynthesis of branched-chain amino acids (BCAA). Catalyzes an alkyl-migration followed by a ketol-acid reduction of (S)-2-acetolactate (S2AL) to yield (R)-2,3-dihydroxy-isovalerate. In the isomerase reaction, S2AL is rearranged via a Mg-dependent methyl migration to produce 3-hydroxy-3-methyl-2-ketobutyrate (HMKB). In the reductase reaction, this 2-ketoacid undergoes a metal-dependent reduction by NADPH to yield (R)-2,3-dihydroxy-isovalerate. This Staphylococcus aureus (strain USA300) protein is Ketol-acid reductoisomerase (NADP(+)).